The sequence spans 68 residues: DNA-directed RNA polymerase subunit omega (68 aa).

This sequence belongs to the RNA polymerase subunit omega family. As to quaternary structure, the RNAP catalytic core consists of 2 alpha, 1 beta, 1 beta' and 1 omega subunit. When a sigma factor is associated with the core the holoenzyme is formed, which can initiate transcription.

It catalyses the reaction RNA(n) + a ribonucleoside 5'-triphosphate = RNA(n+1) + diphosphate. Its function is as follows. Promotes RNA polymerase assembly. Latches the N- and C-terminal regions of the beta' subunit thereby facilitating its interaction with the beta and alpha subunits. This Sulfurovum sp. (strain NBC37-1) protein is DNA-directed RNA polymerase subunit omega.